Here is a 330-residue protein sequence, read N- to C-terminus: MSIIVTGAAGFIGSNLLQALNQRGETDIIAVDDLTDGEQFRNLADADIADYLDQNDFIERYARGDFGPVRALFHQGACASTLESNGRYMMENNYRYSCRLLEASLELGVPFLYASSAAVYGAGRTFREARRYERPLNVYGYSKFLFDQRVRRALPQARSQVVGLRYFNVYGPREGHKGRMASVAYHCYQQLRRDGRVVLFGEHDGFPAGGHLRDFVAVEDVARVNLHFLDHPQRSGIFNLGSGRARSFNEVALAVINSVRASADQPPLVLAQALESGLLGYREFPEALRARYQSHTCADLELLREAGYRDDFLSLEEGVGGYCRWLARSA.

NADP(+)-binding positions include 11 to 12 (FI), 32 to 33 (DD), Q39, Q54, 75 to 79 (QGACA), and N92. Catalysis depends on Y139, which acts as the Proton acceptor. Residue K143 coordinates NADP(+). Residue N168 coordinates substrate. Residues V169 and K177 each coordinate NADP(+). Residue K177 is the Proton acceptor of the active site. Substrate-binding positions include R179, H186, 200–203 (FGEH), R213, and Y292.

This sequence belongs to the NAD(P)-dependent epimerase/dehydratase family. HldD subfamily. Homopentamer. NADP(+) serves as cofactor.

The catalysed reaction is ADP-D-glycero-beta-D-manno-heptose = ADP-L-glycero-beta-D-manno-heptose. It participates in nucleotide-sugar biosynthesis; ADP-L-glycero-beta-D-manno-heptose biosynthesis; ADP-L-glycero-beta-D-manno-heptose from D-glycero-beta-D-manno-heptose 7-phosphate: step 4/4. Its function is as follows. Catalyzes the interconversion between ADP-D-glycero-beta-D-manno-heptose and ADP-L-glycero-beta-D-manno-heptose via an epimerization at carbon 6 of the heptose. The chain is ADP-L-glycero-D-manno-heptose-6-epimerase from Pseudomonas paraeruginosa (strain DSM 24068 / PA7) (Pseudomonas aeruginosa (strain PA7)).